Reading from the N-terminus, the 223-residue chain is Small ribosomal subunit protein uS3 (223 aa).

Residues 38–106 form the KH type-2 domain; it reads IKKYLKSKLA…EVHLNIVEIR (69 aa).

The protein belongs to the universal ribosomal protein uS3 family. Part of the 30S ribosomal subunit. Forms a tight complex with proteins S10 and S14.

Binds the lower part of the 30S subunit head. Binds mRNA in the 70S ribosome, positioning it for translation. In Rhodospirillum rubrum (strain ATCC 11170 / ATH 1.1.1 / DSM 467 / LMG 4362 / NCIMB 8255 / S1), this protein is Small ribosomal subunit protein uS3.